A 211-amino-acid polypeptide reads, in one-letter code: tRNA (pseudouridine(54)-N(1))-methyltransferase (211 aa).

S-adenosyl-L-methionine is bound by residues Leu-128, Gly-150, and Cys-183.

The protein belongs to the methyltransferase superfamily. TrmY family. In terms of assembly, homodimer.

Its subcellular location is the cytoplasm. The catalysed reaction is pseudouridine(54) in tRNA + S-adenosyl-L-methionine = N(1)-methylpseudouridine(54) in tRNA + S-adenosyl-L-homocysteine + H(+). In terms of biological role, specifically catalyzes the N1-methylation of pseudouridine at position 54 (Psi54) in tRNAs. The sequence is that of tRNA (pseudouridine(54)-N(1))-methyltransferase from Methanosarcina mazei (strain ATCC BAA-159 / DSM 3647 / Goe1 / Go1 / JCM 11833 / OCM 88) (Methanosarcina frisia).